A 481-amino-acid chain; its full sequence is Probable glycine dehydrogenase (decarboxylating) subunit 2 (481 aa).

The segment at 1–23 (MVIFEKTRGKNSPSVMPSKKGDV) is disordered. Lys263 carries the N6-(pyridoxal phosphate)lysine modification.

Belongs to the GcvP family. C-terminal subunit subfamily. The glycine cleavage system is composed of four proteins: P, T, L and H. In this organism, the P 'protein' is a heterodimer of two subunits. The cofactor is pyridoxal 5'-phosphate.

The enzyme catalyses N(6)-[(R)-lipoyl]-L-lysyl-[glycine-cleavage complex H protein] + glycine + H(+) = N(6)-[(R)-S(8)-aminomethyldihydrolipoyl]-L-lysyl-[glycine-cleavage complex H protein] + CO2. In terms of biological role, the glycine cleavage system catalyzes the degradation of glycine. The P protein binds the alpha-amino group of glycine through its pyridoxal phosphate cofactor; CO(2) is released and the remaining methylamine moiety is then transferred to the lipoamide cofactor of the H protein. The chain is Probable glycine dehydrogenase (decarboxylating) subunit 2 from Francisella philomiragia subsp. philomiragia (strain ATCC 25017 / CCUG 19701 / FSC 153 / O#319-036).